The chain runs to 350 residues: Selenide, water dikinase (350 aa).

Residue C17 is part of the active site. ATP contacts are provided by residues K20 and 48–50; that span reads LFD. A Mg(2+)-binding site is contributed by D51. ATP is bound by residues D68, D91, and 139–141; that span reads GHS. D91 contributes to the Mg(2+) binding site. D229 contributes to the Mg(2+) binding site.

This sequence belongs to the selenophosphate synthase 1 family. Class I subfamily. In terms of assembly, homodimer. Mg(2+) is required as a cofactor.

It catalyses the reaction hydrogenselenide + ATP + H2O = selenophosphate + AMP + phosphate + 2 H(+). Its function is as follows. Synthesizes selenophosphate from selenide and ATP. The polypeptide is Selenide, water dikinase (Bdellovibrio bacteriovorus (strain ATCC 15356 / DSM 50701 / NCIMB 9529 / HD100)).